Reading from the N-terminus, the 329-residue chain is Indolepyruvate C-methyltransferase (329 aa).

This sequence belongs to the methyltransferase superfamily.

It catalyses the reaction indole-3-pyruvate + S-adenosyl-L-methionine = (R)-3-(indol-3-yl)-2-oxobutanoate + S-adenosyl-L-homocysteine + H(+). With respect to regulation, strongly inhibited by the thiol reagents p-chloromercuribenzoate and N-ethylmaleimide. Partially inhibited by o-phenanthroline and 2,2'-dipyridyl. Competitively inhibited by L-tryptophan and indolmycin. Its function is as follows. Involved in the biosynthesis of the antibiotic indolmycin, an inhibitor of the bacterial tryptophan-tRNA synthetases. Catalyzes the transfer of a methyl group from S-adenosyl-L-methionine to position 3 of the aliphatic side chain of (indol-3-yl)pyruvate to yield 3-methylindolepyruvate. In Streptomyces griseus, this protein is Indolepyruvate C-methyltransferase.